The chain runs to 476 residues: Probable isoprenylcysteine alpha-carbonyl methylesterase ICMEL1 (476 aa).

Residues 92 to 104 (NCLSAFSDDTNGT) show a composition bias toward polar residues. Residues 92-116 (NCLSAFSDDTNGTADGGNNSGDRQT) are disordered. 2 helical membrane-spanning segments follow: residues 153 to 173 (FMAL…VGYY) and 208 to 228 (VVAF…GSLL). Substrate-binding positions include 214-216 (GGA) and 285-287 (QSA). Catalysis depends on residues S286, D388, and H420.

The protein belongs to the AB hydrolase superfamily. Isoprenylcysteine methylesterase family. In terms of tissue distribution, expressed in roots, rosette and cauline leaves, stems, flowers and siliques.

The protein resides in the endoplasmic reticulum membrane. It is found in the golgi apparatus membrane. The enzyme catalyses [protein]-C-terminal S-[(2E,6E)-farnesyl]-L-cysteine methyl ester + H2O = [protein]-C-terminal S-[(2E,6E)-farnesyl]-L-cysteine + methanol + H(+). Its function is as follows. Catalyzes the demethylation of isoprenylcysteine methylesters. May be involved in the regulation of ABA signaling. This Arabidopsis thaliana (Mouse-ear cress) protein is Probable isoprenylcysteine alpha-carbonyl methylesterase ICMEL1.